We begin with the raw amino-acid sequence, 236 residues long: Purine nucleoside phosphorylase DeoD-type (236 aa).

H5 lines the a purine D-ribonucleoside pocket. Phosphate-binding positions include G21, R25, R44, and 88–91; that span reads RVGT. A purine D-ribonucleoside contacts are provided by residues 180–182 and 204–205; these read EME and SD. Residue D205 is the Proton donor of the active site.

It belongs to the PNP/UDP phosphorylase family. In terms of assembly, homohexamer; trimer of homodimers.

The catalysed reaction is a purine D-ribonucleoside + phosphate = a purine nucleobase + alpha-D-ribose 1-phosphate. It carries out the reaction a purine 2'-deoxy-D-ribonucleoside + phosphate = a purine nucleobase + 2-deoxy-alpha-D-ribose 1-phosphate. Catalyzes the reversible phosphorolytic breakdown of the N-glycosidic bond in the beta-(deoxy)ribonucleoside molecules, with the formation of the corresponding free purine bases and pentose-1-phosphate. In Shewanella baltica (strain OS223), this protein is Purine nucleoside phosphorylase DeoD-type.